The chain runs to 316 residues: 2,3-dihydroxyphenylpropionate/2,3-dihydroxicinnamic acid 1,2-dioxygenase (316 aa).

The Proton donor role is filled by H115. H179 functions as the Proton acceptor in the catalytic mechanism.

Belongs to the LigB/MhpB extradiol dioxygenase family. Homotetramer. Fe(2+) is required as a cofactor.

The enzyme catalyses 3-(2,3-dihydroxyphenyl)propanoate + O2 = (2Z,4E)-2-hydroxy-6-oxonona-2,4-dienedioate + H(+). The catalysed reaction is (2E)-3-(2,3-dihydroxyphenyl)prop-2-enoate + O2 = (2Z,4E,7E)-2-hydroxy-6-oxonona-2,4,7-trienedioate + H(+). It participates in aromatic compound metabolism; 3-phenylpropanoate degradation. Its function is as follows. Catalyzes the non-heme iron(II)-dependent oxidative cleavage of 2,3-dihydroxyphenylpropionic acid and 2,3-dihydroxicinnamic acid into 2-hydroxy-6-ketononadienedioate and 2-hydroxy-6-ketononatrienedioate, respectively. The polypeptide is 2,3-dihydroxyphenylpropionate/2,3-dihydroxicinnamic acid 1,2-dioxygenase (Paraburkholderia xenovorans (strain LB400)).